A 214-amino-acid polypeptide reads, in one-letter code: A-type ATP synthase subunit D (214 aa).

This sequence belongs to the V-ATPase D subunit family. As to quaternary structure, has multiple subunits with at least A(3), B(3), C, D, E, F, H, I and proteolipid K(x).

It localises to the cell membrane. Its function is as follows. Component of the A-type ATP synthase that produces ATP from ADP in the presence of a proton gradient across the membrane. This Pyrococcus abyssi (strain GE5 / Orsay) protein is A-type ATP synthase subunit D.